The sequence spans 264 residues: Neurexophilin-2 (264 aa).

A signal peptide spans 1–22 (MRLRPLPLVVVPGLLQLLFCDS). The interval 23-90 (KEVVHATEGL…WDWLANITEI (68 aa)) is II. 4 N-linked (GlcNAc...) asparagine glycosylation sites follow: N86, N139, N149, and N155. An III region spans residues 91-169 (QEPLARTKRR…LVPPSKVVEF (79 aa)). Residues 170–178 (EVSPQSTLE) form an IV (linker domain) region. The v (Cys-rich) stretch occupies residues 179-264 (TKESKSFNCR…HSETPYLSSG (86 aa)).

Belongs to the neurexophilin family. In terms of processing, may be proteolytically processed at the boundary between the N-terminal non-conserved and the central conserved domain in neuron-like cells. As to expression, expressed in brain and kidney.

Its subcellular location is the secreted. Functionally, may be signaling molecules that resemble neuropeptides and that act by binding to alpha-neurexins and possibly other receptors. The polypeptide is Neurexophilin-2 (NXPH2) (Homo sapiens (Human)).